Consider the following 273-residue polypeptide: Flagellin FljO (273 aa).

The protein belongs to the bacterial flagellin family. As to quaternary structure, in C.crescentus, the flagellar filament is composed of multiple flagellins of 29 kDa; 27 kDa and 25 kDa.

The protein localises to the secreted. The protein resides in the bacterial flagellum. Flagellin is the subunit protein which polymerizes to form the filaments of bacterial flagella. The sequence is that of Flagellin FljO (fljO) from Caulobacter vibrioides (strain ATCC 19089 / CIP 103742 / CB 15) (Caulobacter crescentus).